Reading from the N-terminus, the 304-residue chain is Proteasome subunit beta (304 aa).

Positions 1 to 65 (MTWPHFEQLA…LTPTDAVPHG (65 aa)) are cleaved as a propeptide — removed in mature form; by autocatalysis. Thr-66 (nucleophile) is an active-site residue.

This sequence belongs to the peptidase T1B family. In terms of assembly, the 20S proteasome core is composed of 14 alpha and 14 beta subunits that assemble into four stacked heptameric rings, resulting in a barrel-shaped structure. The two inner rings, each composed of seven catalytic beta subunits, are sandwiched by two outer rings, each composed of seven alpha subunits. The catalytic chamber with the active sites is on the inside of the barrel. Has a gated structure, the ends of the cylinder being occluded by the N-termini of the alpha-subunits. Is capped by the proteasome-associated ATPase, ARC.

The protein resides in the cytoplasm. The catalysed reaction is Cleavage of peptide bonds with very broad specificity.. It functions in the pathway protein degradation; proteasomal Pup-dependent pathway. The formation of the proteasomal ATPase ARC-20S proteasome complex, likely via the docking of the C-termini of ARC into the intersubunit pockets in the alpha-rings, may trigger opening of the gate for substrate entry. Interconversion between the open-gate and close-gate conformations leads to a dynamic regulation of the 20S proteasome proteolysis activity. Functionally, component of the proteasome core, a large protease complex with broad specificity involved in protein degradation. This Mycobacterium sp. (strain JLS) protein is Proteasome subunit beta.